Consider the following 176-residue polypeptide: RING-H2 finger protein ATL14 (176 aa).

The disordered stretch occupies residues 1–26; that stretch reads MSITIPYDGSISREPSPSPPPPKANT. A helical membrane pass occupies residues 37–57; sequence FLIGLIMIPVAITAFIFILTS. The RING-type; atypical zinc-finger motif lies at 115 to 157; it reads CVVCIDGFRQGQWCRKLPRCGHVFHRKCVDLWLIKVSTCPICR.

This sequence belongs to the RING-type zinc finger family. ATL subfamily.

The protein localises to the membrane. The enzyme catalyses S-ubiquitinyl-[E2 ubiquitin-conjugating enzyme]-L-cysteine + [acceptor protein]-L-lysine = [E2 ubiquitin-conjugating enzyme]-L-cysteine + N(6)-ubiquitinyl-[acceptor protein]-L-lysine.. The protein operates within protein modification; protein ubiquitination. The protein is RING-H2 finger protein ATL14 (ATL14) of Arabidopsis thaliana (Mouse-ear cress).